The sequence spans 90 residues: UPF0335 protein RPA4190 (90 aa).

Belongs to the UPF0335 family.

The protein is UPF0335 protein RPA4190 of Rhodopseudomonas palustris (strain ATCC BAA-98 / CGA009).